Reading from the N-terminus, the 226-residue chain is Deoxyribose-phosphate aldolase (226 aa).

Catalysis depends on D94, which acts as the Proton donor/acceptor. K156 acts as the Schiff-base intermediate with acetaldehyde in catalysis. The Proton donor/acceptor role is filled by K185.

It belongs to the DeoC/FbaB aldolase family. DeoC type 1 subfamily.

It is found in the cytoplasm. It carries out the reaction 2-deoxy-D-ribose 5-phosphate = D-glyceraldehyde 3-phosphate + acetaldehyde. The protein operates within carbohydrate degradation; 2-deoxy-D-ribose 1-phosphate degradation; D-glyceraldehyde 3-phosphate and acetaldehyde from 2-deoxy-alpha-D-ribose 1-phosphate: step 2/2. Catalyzes a reversible aldol reaction between acetaldehyde and D-glyceraldehyde 3-phosphate to generate 2-deoxy-D-ribose 5-phosphate. The sequence is that of Deoxyribose-phosphate aldolase from Burkholderia orbicola (strain MC0-3).